Consider the following 309-residue polypeptide: Porphobilinogen deaminase (309 aa).

Position 244 is an S-(dipyrrolylmethanemethyl)cysteine (cysteine 244).

This sequence belongs to the HMBS family. In terms of assembly, monomer. Dipyrromethane is required as a cofactor.

It carries out the reaction 4 porphobilinogen + H2O = hydroxymethylbilane + 4 NH4(+). The protein operates within porphyrin-containing compound metabolism; protoporphyrin-IX biosynthesis; coproporphyrinogen-III from 5-aminolevulinate: step 2/4. Tetrapolymerization of the monopyrrole PBG into the hydroxymethylbilane pre-uroporphyrinogen in several discrete steps. The protein is Porphobilinogen deaminase of Listeria monocytogenes serovar 1/2a (strain ATCC BAA-679 / EGD-e).